A 261-amino-acid polypeptide reads, in one-letter code: Protein STAY-GREEN, chloroplastic (261 aa).

A chloroplast-targeting transit peptide spans Met1–Glu54.

The protein belongs to the staygreen family.

It localises to the plastid. Its subcellular location is the chloroplast. Its function is as follows. Probably involved in the disassembling mechanism of the intact light-harvesting complex of photosystem II (LHCII) in the thylakoid membranes. Required for the chlorophyll breakdown pathway. Acts independent and upstream of pheophorbide a oxygenase (PAO). The sequence is that of Protein STAY-GREEN, chloroplastic (SGR) from Pisum sativum (Garden pea).